The chain runs to 773 residues: MTISPPERGEKAKGAAPTPYDQPVDRDHAPIDYEKLNKPGFWSSKLSKGPKTTTWIWNLHADAHDFDTHLGDLEETSRKIFSAHFGHLAVVFIWMSAAFFHGARFSNYTGWLADPTNVKPGAQVVWPVVGQEILNADLGGNYQGLQITSGIFQMWRAWGITSEVQLMALAIGGVIMAALMLHGGIYHYHKAAPKLEWFRKIEPMLQHHQIALIGLGSIAWAGHLIHIGAPVAALLDAIDAGNPLVVDGVSIASAADVTNLAPRLCDPAVASQIFPSLAGRTVENFFTLNWWAFTDILTNKGGLNPVTGSLWMTDISHHHLAFGVFAIFGGHMWRNNVHGVGHSMKEIMDVHKGDPILFPAPKGHQGIFEFLSNSWHGQLSINLAMVGSASIVVAHHMYALPPYPYIAIDYPTVLGLFTHHMWIGGLFICGAAAHAGIAMIRDYDPAVHIDNVLDRILKARDAIISHLNWVCMWLGFHSFGLYIHNDVMRALGRPKDMFSDTGIQLQPFLAQWVQNLQQSAVGTGDLVGAGNLPGSVLSEVFNGNVVEVGGKVAIAPIPLGTADLMIHHVHAFTIHVTLLILLKGVLYARSSRLIPDKAQLGFRFPCDGPGRGGTCQVSSWDHVFLGLFWMYNSLSVVIFHFSWKMQSDVWGLTGGNFAQSSITINGWLRDFLWAQSSQVLTSYGQPISMYGLMFLGAHFVWAFSLMFLFSGRGYWQELFESIIWAHNKLKVAPTIQPRALSITQGRAVGVAHFLLGGIATTWAFFHARLIGLG.

The tract at residues 1–27 is disordered; that stretch reads MTISPPERGEKAKGAAPTPYDQPVDRD. A run of 8 helical transmembrane segments spans residues 80–103, 166–189, 205–229, 315–333, 375–398, 414–440, 462–484, and 564–582; these read IFSAHFGHLAVVFIWMSAAFFHGA, LMALAIGGVIMAALMLHGGIYHYH, LQHHQIALIGLGSIAWAGHLIHIGA, ISHHHLAFGVFAIFGGHMW, WHGQLSINLAMVGSASIVVAHHMY, LGLFTHHMWIGGLFICGAAAHAGIAMI, AIISHLNWVCMWLGFHSFGLYIH, and LMIHHVHAFTIHVTLLILL. 2 residues coordinate [4Fe-4S] cluster: Cys-606 and Cys-615. 2 helical membrane passes run 622-643 and 687-709; these read HVFLGLFWMYNSLSVVIFHFSW and ISMYGLMFLGAHFVWAFSLMFLF. His-698 is a divinylchlorophyll a' binding site. Divinyl chlorophyll a is bound by residues Met-706 and Tyr-714. Trp-715 lines the phylloquinone pocket. Residues 747–767 traverse the membrane as a helical segment; that stretch reads AVGVAHFLLGGIATTWAFFHA.

It belongs to the PsaA/PsaB family. In terms of assembly, the PsaA/B heterodimer binds the P700 divinyl chlorophyll special pair and subsequent electron acceptors. PSI consists of a core antenna complex that captures photons, and an electron transfer chain that converts photonic excitation into a charge separation. The cyanobacterial PSI reaction center is composed of one copy each of PsaA,B,C,D,E,F,I,J,K,L,M and X, and forms trimeric complexes. The cofactor is PSI electron transfer chain: 5 divinyl chlorophyll a, 1 divinyl chlorophyll a', 2 phylloquinones and 3 4Fe-4S clusters. PSI core antenna: 90 divinyl chlorophyll a, 22 carotenoids, 3 phospholipids and 1 galactolipid. P700 is a divinyl chlorophyll a/divinyl chlorophyll a' dimer, A0 is one or more divinylchlorophyll a, A1 is one or both phylloquinones and FX is a shared 4Fe-4S iron-sulfur center..

It is found in the cellular thylakoid membrane. It carries out the reaction reduced [plastocyanin] + hnu + oxidized [2Fe-2S]-[ferredoxin] = oxidized [plastocyanin] + reduced [2Fe-2S]-[ferredoxin]. PsaA and PsaB bind P700, the primary electron donor of photosystem I (PSI), as well as the electron acceptors A0, A1 and FX. PSI is a plastocyanin/cytochrome c6-ferredoxin oxidoreductase, converting photonic excitation into a charge separation, which transfers an electron from the donor P700 chlorophyll pair to the spectroscopically characterized acceptors A0, A1, FX, FA and FB in turn. Oxidized P700 is reduced on the lumenal side of the thylakoid membrane by plastocyanin or cytochrome c6. The sequence is that of Photosystem I P700 chlorophyll a apoprotein A1 from Prochlorococcus marinus (strain SARG / CCMP1375 / SS120).